The chain runs to 173 residues: MAIVLGIDPGSRVTGYGVIRQQGRQLTYLGSGCIRTVVDDMPTRLKLIYAGVTEIITQFQPDFFAIEQVFMAKNPDSALKLGQARGAAIVAAVNLNLPVSEYAARQVKQTVVGTGAAEKSQVQHMVRSLLKLPANPQADAADALAIAITHCHLSQNTLRLGNDQMTLSRGRIR.

Active-site residues include Asp8, Glu67, and Asp139. Residues Asp8, Glu67, and Asp139 each coordinate Mg(2+).

This sequence belongs to the RuvC family. As to quaternary structure, homodimer which binds Holliday junction (HJ) DNA. The HJ becomes 2-fold symmetrical on binding to RuvC with unstacked arms; it has a different conformation from HJ DNA in complex with RuvA. In the full resolvosome a probable DNA-RuvA(4)-RuvB(12)-RuvC(2) complex forms which resolves the HJ. Requires Mg(2+) as cofactor.

Its subcellular location is the cytoplasm. The enzyme catalyses Endonucleolytic cleavage at a junction such as a reciprocal single-stranded crossover between two homologous DNA duplexes (Holliday junction).. In terms of biological role, the RuvA-RuvB-RuvC complex processes Holliday junction (HJ) DNA during genetic recombination and DNA repair. Endonuclease that resolves HJ intermediates. Cleaves cruciform DNA by making single-stranded nicks across the HJ at symmetrical positions within the homologous arms, yielding a 5'-phosphate and a 3'-hydroxyl group; requires a central core of homology in the junction. The consensus cleavage sequence is 5'-(A/T)TT(C/G)-3'. Cleavage occurs on the 3'-side of the TT dinucleotide at the point of strand exchange. HJ branch migration catalyzed by RuvA-RuvB allows RuvC to scan DNA until it finds its consensus sequence, where it cleaves and resolves the cruciform DNA. The protein is Crossover junction endodeoxyribonuclease RuvC of Yersinia pseudotuberculosis serotype O:1b (strain IP 31758).